The following is a 142-amino-acid chain: Sorting nexin-3 (142 aa).

Positions 21-138 constitute a PX domain; that stretch reads NFLEIEVRNP…AAFVQDPNWD (118 aa). Positions 64, 66, 90, 95, and 104 each coordinate a 1,2-diacyl-sn-glycero-3-phospho-(1D-myo-inositol-3-phosphate).

This sequence belongs to the sorting nexin family.

The protein localises to the cytoplasm. The protein resides in the golgi apparatus membrane. It localises to the prevacuolar compartment membrane. In terms of biological role, required for retention of late Golgi membrane proteins. Component of the retrieval machinery that functions by direct interaction with the cytosolic tails of certain TGN membrane proteins during the sorting/budding process at the prevacuolar compartment. Binds phosphatidylinositol 3-phosphate (PtdIns(P3)). In Neurospora crassa (strain ATCC 24698 / 74-OR23-1A / CBS 708.71 / DSM 1257 / FGSC 987), this protein is Sorting nexin-3 (snx-3).